We begin with the raw amino-acid sequence, 845 residues long: Proto-oncogene vav (845 aa).

A Calponin-homology (CH) domain is found at 1-119 (MELWRQCTHW…YTLSALSWTP (119 aa)). The DH domain occupies 194-373 (KRCCCLREIQ…RDLAQCVNEV (180 aa)). Residues 402 to 504 (RPKIDGELKI…WMEQFEMAIS (103 aa)) enclose the PH domain. A Phorbol-ester/DAG-type zinc finger spans residues 515-564 (GHDFQMFSFEETTSCKACQMLLRGTFYQGYRCHRCRASAHKECLGRVPPC). Residues 592–660 (LGLPKMEVFQ…PCNRVKPYVH (69 aa)) enclose the SH3 1 domain. The region spanning 671–765 (WYAGPMERAG…SLDTTLQFPF (95 aa)) is the SH2 domain. The SH3 2 domain maps to 782 to 842 (KYFGTAKARY…PANYVEEDYS (61 aa)). 2 positions are modified to phosphotyrosine: Y826 and Y844.

In terms of assembly, interacts with SHB. Interacts with SH2B2, GRB2, GRB3, DOCK2, SLA, TEC and ZNF655/VIK. Interacts with SIAH2; without leading to its degradation. Associates with BLNK, PLCG1, GRB2 and NCK1 in a B-cell antigen receptor-dependent fashion. Interacts with CBLB; which inhibits tyrosine phosphorylation and down-regulates activity. May interact with CCPG1. Interacts with CLNK. Interacts with THEMIS2. Interacts with NEK3 and this interaction is prolactin-dependent. Interacts with ITK. Interacts with PTK2B/PYK2. Interacts with HCK. Interacts with PTK2B/PYK2. Interacts (via SH2 domain) with SYK. Interacts with ANKRD54. Interacts with CD6. Interacts with isoform 2 of CRACR2A. Interacts with LCP2; this interaction plays a role in TCR-mediated cytokine production. Post-translationally, phosphorylated on tyrosine residues by HCK in response to IFNG and bacterial lipopolysaccharide (LPS). Phosphorylated by FYN. As to expression, widely expressed in hematopoietic cells but not in other cell types.

Its function is as follows. Couples tyrosine kinase signals with the activation of the Rho/Rac GTPases, thus leading to cell differentiation and/or proliferation. The polypeptide is Proto-oncogene vav (VAV1) (Homo sapiens (Human)).